The chain runs to 1456 residues: Macrophage mannose receptor 1 (1456 aa).

The N-terminal stretch at 1–19 (MRLLLLLAFISVIPVSVQL) is a signal peptide. Residues 20-1388 (LDARQFLIYN…DPQPKGSSKA (1369 aa)) are Extracellular-facing. The region spanning 22–142 (ARQFLIYNED…SGLWSRWKVY (121 aa)) is the Ricin B-type lectin domain. Cystine bridges form between Cys-35–Cys-49, Cys-74–Cys-91, Cys-102–Cys-149, Cys-168–Cys-194, Cys-182–Cys-209, Cys-247–Cys-340, and Cys-316–Cys-332. The N-linked (GlcNAc...) asparagine glycan is linked to Asn-104. The 49-residue stretch at 163-211 (ANGAVCAFPFKFENKWYADCTSAGRSDGWLWCGTTTDYDKDKLFGFCPL) folds into the Fibronectin type-II domain. A C-type lectin 1 domain is found at 225–341 (LTGILYQINS…CVQKLGYICK (117 aa)). Asn-344 carries N-linked (GlcNAc...) asparagine glycosylation. C-type lectin domains follow at residues 369–487 (YAGH…YICK), 511–626 (HGFY…FVCK), 655–778 (KTSM…WICQ), and 807–923 (YKDY…FICQ). 2 cysteine pairs are disulfide-bonded: Cys-391–Cys-486 and Cys-463–Cys-478. The N-linked (GlcNAc...) asparagine glycan is linked to Asn-529. 6 disulfides stabilise this stretch: Cys-532-Cys-625, Cys-600-Cys-617, Cys-680-Cys-777, Cys-753-Cys-769, Cys-828-Cys-922, and Cys-899-Cys-914. 2 N-linked (GlcNAc...) asparagine glycosylation sites follow: Asn-926 and Asn-930. 3 C-type lectin domains span residues 951–1079 (YKNK…YICQ), 1101–1212 (YGKS…FLCK), and 1240–1355 (FYGH…FICK). Intrachain disulfides connect Cys-976–Cys-1078, Cys-1051–Cys-1070, Cys-1122–Cys-1211, Cys-1189–Cys-1203, Cys-1262–Cys-1354, and Cys-1331–Cys-1346. Asn-1159 carries an N-linked (GlcNAc...) asparagine glycan. Residue Asn-1204 is glycosylated (N-linked (GlcNAc...) asparagine). The helical transmembrane segment at 1389–1409 (AGVVTVVLLIVIGAGVAAYFF) threads the bilayer. Residues 1410–1456 (YKKRHALHIPQEATFENTLYFNSNLSPGTSDTKDLMGNIEQNEHAII) are Cytoplasmic-facing.

As to expression, detected in macrophages.

It is found in the endosome membrane. It localises to the cell membrane. Its function is as follows. Mediates the endocytosis of glycoproteins by macrophages. Binds both sulfated and non-sulfated polysaccharide chains. Acts as phagocytic receptor for bacteria, fungi and other pathogens. This is Macrophage mannose receptor 1 (Mrc1) from Mus musculus (Mouse).